Here is a 94-residue protein sequence, read N- to C-terminus: Small ribosomal subunit protein bS20c (94 aa).

It belongs to the bacterial ribosomal protein bS20 family.

It is found in the plastid. Its subcellular location is the chloroplast. In terms of biological role, binds directly to 16S ribosomal RNA. The polypeptide is Small ribosomal subunit protein bS20c (Porphyra purpurea (Red seaweed)).